A 177-amino-acid polypeptide reads, in one-letter code: MITAMYAVGPNGEFGLRGKLPWGSFKEELDAFYSQLDVLNPDNIIIGAGTYLALPYAVRERMIGASDLFIRADRPLPDDITHDIYTPISMIGDTLPTFLKDQQTVVLGGANLLLEMYQHGHIESAFVSTIFSEQKLEADTHLDSMILDYNYESTRLVYAVGANSDNSLRFVQELVTY.

It carries out the reaction (6S)-5,6,7,8-tetrahydrofolate + NADP(+) = 7,8-dihydrofolate + NADPH + H(+). Functionally, provides the tetrahydrofolates necessary for the synthesis of nucleotides and amino acids. Bacteriophage T5 induces high levels of dihydrofolate reductase in the host cell, probably for the viral replication. In Escherichia phage T5 (Enterobacteria phage T5), this protein is Dihydrofolate reductase.